Here is a 300-residue protein sequence, read N- to C-terminus: Transcription factor E2F5 (300 aa).

Residues 2–73 mediate DNA binding; the sequence is GSSRHEKSLG…KNSIQWKGVG (72 aa). The tract at residues 31–53 is leucine-zipper; that stretch reads LKAAADTLAVRQKRRIYDITNVL. Residues 36-73 carry the DEF box motif; sequence DTLAVRQKRRIYDITNVLEGIDLIEKKSKNSIQWKGVG. Residues 74–170 are dimerization; the sequence is AGCNTKEVID…GQNGQKKYQI (97 aa). The interval 191-250 is disordered; the sequence is SKPVVFPVPPPDDLTQPSSQSSTSVTPPKSTMAAQNLPEQHVSERSQNFQQTPATEISSG. Over residues 203–221 the composition is skewed to low complexity; the sequence is DLTQPSSQSSTSVTPPKST. Positions 235-246 are enriched in polar residues; sequence RSQNFQQTPATE. The transactivation stretch occupies residues 242–300; the sequence is TPATEISSGSISGDIIDELMSSDVFPLLRLSPTPADDYNFNLDDNEGVCDLFDVQILNY. An RBL2 association region spans residues 277-294; that stretch reads DDYNFNLDDNEGVCDLFD.

Belongs to the E2F/DP family. Component of the DRTF1/E2F transcription factor complex. Binds cooperatively with DP-1 to E2F sites. Interaction with retinoblastoma protein RB1 or proteins RBL1 and RBL2 inhibits the E2F transactivation domain. Component of the DREAM complex (also named LINC complex) at least composed of E2F4, E2F5, LIN9, LIN37, LIN52, LIN54, MYBL1, MYBL2, RBL1, RBL2, RBBP4, TFDP1 and TFDP2. The complex exists in quiescent cells where it represses cell cycle-dependent genes. It dissociates in S phase when LIN9, LIN37, LIN52 and LIN54 form a subcomplex that binds to MYBL2. Found in placenta followed by kidney, lung and brain.

Its subcellular location is the nucleus. In terms of biological role, transcriptional activator that binds to E2F sites, these sites are present in the promoter of many genes whose products are involved in cell proliferation. May mediate growth factor-initiated signal transduction. It is likely involved in the early responses of resting cells to growth factor stimulation. Specifically required for multiciliate cell differentiation: together with MCIDAS and E2F5, binds and activate genes required for centriole biogenesis. The chain is Transcription factor E2F5 (E2f5) from Rattus norvegicus (Rat).